Reading from the N-terminus, the 580-residue chain is Adenine deaminase (580 aa).

This sequence belongs to the metallo-dependent hydrolases superfamily. Adenine deaminase family. Requires Mn(2+) as cofactor.

The enzyme catalyses adenine + H2O + H(+) = hypoxanthine + NH4(+). In Listeria monocytogenes serovar 1/2a (strain ATCC BAA-679 / EGD-e), this protein is Adenine deaminase.